Here is a 153-residue protein sequence, read N- to C-terminus: Regulator of sigma D (153 aa).

Belongs to the Rsd/AlgQ family. As to quaternary structure, interacts with RpoD.

The protein resides in the cytoplasm. Functionally, binds RpoD and negatively regulates RpoD-mediated transcription activation by preventing the interaction between the primary sigma factor RpoD with the catalytic core of the RNA polymerase and with promoter DNA. May be involved in replacement of the RNA polymerase sigma subunit from RpoD to RpoS during the transition from exponential growth to the stationary phase. The protein is Regulator of sigma D of Pectobacterium atrosepticum (strain SCRI 1043 / ATCC BAA-672) (Erwinia carotovora subsp. atroseptica).